The primary structure comprises 462 residues: MKIQLVRWHCSRNALWNRAFYSTRKATKNASSATPATMTSMVSQRQDLFMTDPLSPGSMFFLPNGAKIFNKLIEFMKLQQKFKFGFNEVVTPLIYKKTLWEKSGHWENYADDMFKVETTDEEKEEYGLKPMNCPGHCLIFGKKDRSYNELPLRFSDFSPLHRNEASGALSGLTRLRKFHQDDGHIFCTPSQVKSEIFNSLKLIDIVYNKIFPFVKGGSGAESNYFINFSTRPDHFIGDLKVWNHAEQVLKEILEESGKPWKLNPGDGAFYGPKLDIMVTDHLRKTHQVATIQLDFQLPERFDLKFKDQDNSYKRPIMIHRATFGSIERFMALLIDSNEGRWPFWLNPYQAVIIPVNTKNVQQLDMCTALQKKLRNELEADDMEPVPLNDWHFNVDLDIRNEPVGYRIKSAILKNYSYLIIVGDEEVQLQKYNIRERDNRKSFEKLTMSQIWEKFIELEKNYK.

Residues 1-45 (MKIQLVRWHCSRNALWNRAFYSTRKATKNASSATPATMTSMVSQR) constitute a mitochondrion transit peptide.

This sequence belongs to the class-II aminoacyl-tRNA synthetase family.

The protein resides in the mitochondrion matrix. It catalyses the reaction tRNA(Thr) + L-threonine + ATP = L-threonyl-tRNA(Thr) + AMP + diphosphate + H(+). The sequence is that of Threonine--tRNA ligase, mitochondrial (MST1) from Saccharomyces cerevisiae (strain ATCC 204508 / S288c) (Baker's yeast).